Consider the following 292-residue polypeptide: Pyridoxal 5'-phosphate synthase subunit PdxS (292 aa).

Residue D22 participates in D-ribose 5-phosphate binding. K79 serves as the catalytic Schiff-base intermediate with D-ribose 5-phosphate. G151 is a D-ribose 5-phosphate binding site. R163 lines the D-glyceraldehyde 3-phosphate pocket. Residues G212 and 233–234 contribute to the D-ribose 5-phosphate site; that span reads GS.

Belongs to the PdxS/SNZ family. As to quaternary structure, in the presence of PdxT, forms a dodecamer of heterodimers.

It carries out the reaction aldehydo-D-ribose 5-phosphate + D-glyceraldehyde 3-phosphate + L-glutamine = pyridoxal 5'-phosphate + L-glutamate + phosphate + 3 H2O + H(+). Its pathway is cofactor biosynthesis; pyridoxal 5'-phosphate biosynthesis. In terms of biological role, catalyzes the formation of pyridoxal 5'-phosphate from ribose 5-phosphate (RBP), glyceraldehyde 3-phosphate (G3P) and ammonia. The ammonia is provided by the PdxT subunit. Can also use ribulose 5-phosphate and dihydroxyacetone phosphate as substrates, resulting from enzyme-catalyzed isomerization of RBP and G3P, respectively. The polypeptide is Pyridoxal 5'-phosphate synthase subunit PdxS (Ruminiclostridium cellulolyticum (strain ATCC 35319 / DSM 5812 / JCM 6584 / H10) (Clostridium cellulolyticum)).